Consider the following 371-residue polypeptide: Putative glutamate--cysteine ligase 2 (371 aa).

This sequence belongs to the glutamate--cysteine ligase type 2 family. YbdK subfamily.

The enzyme catalyses L-cysteine + L-glutamate + ATP = gamma-L-glutamyl-L-cysteine + ADP + phosphate + H(+). In terms of biological role, ATP-dependent carboxylate-amine ligase which exhibits weak glutamate--cysteine ligase activity. This chain is Putative glutamate--cysteine ligase 2, found in Nitrosospira multiformis (strain ATCC 25196 / NCIMB 11849 / C 71).